The sequence spans 87 residues: uncharacterized protein (87 aa).

The N-terminal stretch at 1–19 is a signal peptide; sequence MLVLLVAVLVTAVYAFVHA. The helical transmembrane segment at 39 to 59 threads the bilayer; that stretch reads LVILGAAVALASILYPVLGVL.

This sequence to M.leprae ML2453.

The protein localises to the membrane. This is an uncharacterized protein from Mycobacterium bovis (strain ATCC BAA-935 / AF2122/97).